Reading from the N-terminus, the 251-residue chain is tRNA (guanine-N(7)-)-methyltransferase (251 aa).

S-adenosyl-L-methionine-binding positions include G72, 95–96 (EI), 132–133 (NA), and L152. D155 is an active-site residue. 230 to 232 (SEE) is a binding site for S-adenosyl-L-methionine.

It belongs to the class I-like SAM-binding methyltransferase superfamily. TrmB family.

The protein localises to the nucleus. The enzyme catalyses guanosine(46) in tRNA + S-adenosyl-L-methionine = N(7)-methylguanosine(46) in tRNA + S-adenosyl-L-homocysteine. It participates in tRNA modification; N(7)-methylguanine-tRNA biosynthesis. In terms of biological role, catalyzes the formation of N(7)-methylguanine at position 46 (m7G46) in tRNA. The polypeptide is tRNA (guanine-N(7)-)-methyltransferase (Drosophila willistoni (Fruit fly)).